The chain runs to 568 residues: TNF receptor-associated factor 3 (568 aa).

The segment at 1 to 28 (MESSKKMDSPGALQTNPPLKLHTDRSAG) is disordered. A Phosphoserine modification is found at serine 9. Residue cysteine 56 forms a Glycyl cysteine thioester (Cys-Gly) (interchain with G-Cter in ubiquitin) linkage. The RING-type zinc-finger motif lies at 68–77 (CGHRFCESCM). A Glycyl cysteine thioester (Cys-Gly) (interchain with G-Cter in ubiquitin) cross-link involves residue cysteine 124. TRAF-type zinc fingers lie at residues 135–190 (VHLK…IALQ) and 191–249 (KHED…QQIK). Residue lysine 168 forms a Glycyl lysine isopeptide (Lys-Gly) (interchain with G-Cter in ubiquitin) linkage. Residues 267 to 338 (SNSLEKKVSL…KLKELDKEIR (72 aa)) adopt a coiled-coil conformation. Lysine 329 participates in a covalent cross-link: Glycyl lysine isopeptide (Lys-Gly) (interchain with G-Cter in ubiquitin). The (Microbial infection) Interaction with glycoprotein N of Andes and New York hantaviruses stretch occupies residues 392–415 (LSVHDIRLADMDLRFQVLETASYN). One can recognise an MATH domain in the interval 415–560 (NGVLIWKIRD…DDTIFIKVIV (146 aa)).

Belongs to the TNF receptor-associated factor family. A subfamily. Homotrimer. Heterotrimer with TRAF2 and TRAF5. Interacts with LTBR/TNFRSF3, TNFRSF4, TNFRSF5/CD40, TNFRSF8/CD30, TNFRSF13C TNFRSF17/BCMA, TLR4 and EDAR. Interacts with MAP3K5, MAP3K14, TRAIP/TRIP, TDP2/TTRAP, TANK/ITRAF and TRAF3IP1. Interaction with TNFRSF5/CD40 is modulated by TANK/ITRAF, which competes for the same binding site. Interacts with TICAM1. Interacts with TRAFD1. Interacts with OTUB1, OTUB2 and OTUD5. Interacts with RNF216, OPTN and TBK1. Identified in a complex with TRAF2, MAP3K14 and BIRC3. Interacts with BIRC2 and BIRC3. Upon exposure to bacterial lipopolysaccharide (LPS), recruited to a transient complex containing TLR4, TRAF3, TRAF6, IKBKG, MAP3K7, MYD88, TICAM1, BIRC2, BIRC3 and UBE2N. Interacts (via RING-type zinc finger domain) with SRC. Interacts with CARD14. Interacts (via MATH domain) with PTPN22; the interaction promotes TRAF3 polyubiquitination. Interacts with MAVS. Directly interacts with DDX3X; this interaction stimulates TRAF3 'Lys-63' ubiquitination. Interacts with IRF3. Interacts with IKBKE in the course of Sendai virus infection. Interacts with TRIM35. Interacts with GAPDH; promoting TRAF3 ubiquitination. Interacts with PPP3CA and PPP3CB. Interacts with ATP1B1; promoting TRAF3 ubiquitination. Interacts with RALGDS. Interacts with FBXO11. In terms of assembly, (Microbial infection) Interacts (via N-terminus) with New York hantavirus glycoprotein N (via C-terminus); this interaction inhibits the formation of TRAF3-TBK1 complexes. As to quaternary structure, (Microbial infection) Interacts with Andes hantavirus glycoprotein N (via C-terminus); this interaction inhibits the formation of TRAF3-TBK1 complexes. (Microbial infection) Interacts with Tula hantavirus glycoprotein N (via C-terminus); this interaction inhibits the formation of TRAF3-TBK1 complexes. In terms of assembly, (Microbial infection) Interacts with Epstein-Barr virus protein LMP1. Undergoes 'Lys-48'-linked polyubiquitination, leading to its proteasomal degradation in response to signaling by TNFSF13B, TLR4 or through CD40. 'Lys-48'-linked polyubiquitinated form is deubiquitinated by OTUD7B, preventing TRAF3 proteolysis and over-activation of non-canonical NF-kappa-B. Undergoes 'Lys-63'-linked ubiquitination during early stages of virus infection, and 'Lys-48'-linked ubiquitination during later stages. Undergoes both 'Lys-48'-linked and 'Lys-63'-linked ubiquitination in response to TLR3 and TLR4 signaling. 'Lys-63'-linked ubiquitination can be mediated by TRIM35. Deubiquitinated by OTUB1, OTUB2 and OTUD5. Undergoes 'Lys-63'-linked deubiquitination by MYSM1 to terminate the pattern-recognition receptors/PRRs pathways. Also undergoes 'Lys-29'-linked ubiquitination on Cys-56 and Cys-124 by NEDD4L; leading to increased 'Lys-48'- and 'Lys-63'-linked ubiquitination as well as increased binding to TBK1. TLR4 signals emanating from bacteria containing vesicles trigger 'Lys-33'-linked polyubiquitination that promotes the assembly of the exocyst complex thereby connecting innate immune signaling to the cellular trafficking apparatus. Deubiquitinated by USP25 during viral infection, leading to TRAF3 stabilization and type I interferon production. Ubiquitinated at Lys-329 by the SCF(FBXL2) complex, leading to its degradation by the proteasome. 'Lys-63'-linked ubiquitination by FBXO11 in a NEDD8-dependent manner promotes the amplification of IFN-I signaling. Post-translationally, (Microbial infection) Cleaved by enterovirus D68 protease 2A; leading to inhibition of NF-kappa-B or IFN-beta triggered by TRAF3.

The protein resides in the cytoplasm. It localises to the endosome. It is found in the mitochondrion. It carries out the reaction S-ubiquitinyl-[E2 ubiquitin-conjugating enzyme]-L-cysteine + [acceptor protein]-L-lysine = [E2 ubiquitin-conjugating enzyme]-L-cysteine + N(6)-ubiquitinyl-[acceptor protein]-L-lysine.. Cytoplasmic E3 ubiquitin ligase that regulates various signaling pathways, such as the NF-kappa-B, mitogen-activated protein kinase (MAPK) and interferon regulatory factor (IRF) pathways, and thus controls a lot of biological processes in both immune and non-immune cell types. In TLR and RLR signaling pathways, acts as an E3 ubiquitin ligase promoting the synthesis of 'Lys-63'-linked polyubiquitin chains on several substrates such as ASC that lead to the activation of the type I interferon response or the inflammasome. Following the activation of certain TLRs such as TLR4, acts as a negative NF-kappa-B regulator, possibly to avoid unregulated inflammatory response, and its degradation via 'Lys-48'-linked polyubiquitination is required for MAPK activation and production of inflammatory cytokines. Alternatively, when TLR4 orchestrates bacterial expulsion, TRAF3 undergoes 'Lys-33'-linked polyubiquitination and subsequently binds to RALGDS, mobilizing the exocyst complex to rapidly expel intracellular bacteria back for clearance. Also acts as a constitutive negative regulator of the alternative NF-kappa-B pathway, which controls B-cell survival and lymphoid organ development. Required for normal antibody isotype switching from IgM to IgG. Plays a role T-cell dependent immune responses. Down-regulates proteolytic processing of NFKB2, and thereby inhibits non-canonical activation of NF-kappa-B. Promotes ubiquitination and proteasomal degradation of MAP3K14. The protein is TNF receptor-associated factor 3 of Homo sapiens (Human).